A 100-amino-acid chain; its full sequence is Urease subunit gamma (100 aa).

The protein belongs to the urease gamma subunit family. In terms of assembly, heterotrimer of UreA (gamma), UreB (beta) and UreC (alpha) subunits. Three heterotrimers associate to form the active enzyme.

The protein resides in the cytoplasm. It carries out the reaction urea + 2 H2O + H(+) = hydrogencarbonate + 2 NH4(+). Its pathway is nitrogen metabolism; urea degradation; CO(2) and NH(3) from urea (urease route): step 1/1. In Rhizobium etli (strain CIAT 652), this protein is Urease subunit gamma.